The sequence spans 584 residues: 2-succinyl-5-enolpyruvyl-6-hydroxy-3-cyclohexene-1-carboxylate synthase (584 aa).

This sequence belongs to the TPP enzyme family. MenD subfamily. Homodimer. It depends on Mg(2+) as a cofactor. Mn(2+) serves as cofactor. Thiamine diphosphate is required as a cofactor.

It carries out the reaction isochorismate + 2-oxoglutarate + H(+) = 5-enolpyruvoyl-6-hydroxy-2-succinyl-cyclohex-3-ene-1-carboxylate + CO2. Its pathway is quinol/quinone metabolism; 1,4-dihydroxy-2-naphthoate biosynthesis; 1,4-dihydroxy-2-naphthoate from chorismate: step 2/7. The protein operates within quinol/quinone metabolism; menaquinone biosynthesis. Functionally, catalyzes the thiamine diphosphate-dependent decarboxylation of 2-oxoglutarate and the subsequent addition of the resulting succinic semialdehyde-thiamine pyrophosphate anion to isochorismate to yield 2-succinyl-5-enolpyruvyl-6-hydroxy-3-cyclohexene-1-carboxylate (SEPHCHC). The protein is 2-succinyl-5-enolpyruvyl-6-hydroxy-3-cyclohexene-1-carboxylate synthase of Bacillus cereus (strain ATCC 14579 / DSM 31 / CCUG 7414 / JCM 2152 / NBRC 15305 / NCIMB 9373 / NCTC 2599 / NRRL B-3711).